The primary structure comprises 1531 residues: DNA topoisomerase 2-alpha (1531 aa).

M1 bears the N-acetylmethionine mark. S4 bears the Phosphoserine mark. A Glycyl lysine isopeptide (Lys-Gly) (interchain with G-Cter in SUMO2) cross-link involves residue K17. ATP-binding positions include N91, N120, and 148–150 (SSN). Residues K156 and K157 each participate in a glycyl lysine isopeptide (Lys-Gly) (interchain with G-Cter in SUMO2) cross-link. 161–168 (GRNGYGAK) lines the ATP pocket. A Glycyl lysine isopeptide (Lys-Gly) (interchain with G-Cter in SUMO2) cross-link involves residue K261. T282 carries the post-translational modification Phosphothreonine. The segment at 342-344 (KKK) is interaction with DNA. Residue K352 forms a Glycyl lysine isopeptide (Lys-Gly) (interchain with G-Cter in SUMO2) linkage. 376 to 378 (QTK) provides a ligand contact to ATP. Glycyl lysine isopeptide (Lys-Gly) (interchain with G-Cter in SUMO2) cross-links involve residues K386, K397, K416, K418, K425, and K440. Residues 455 to 572 (CTLILTEGDS…SLLRHRFLEE (118 aa)) enclose the Toprim domain. E461 contributes to the Mg(2+) binding site. Residues K466, K480, and K529 each participate in a glycyl lysine isopeptide (Lys-Gly) (interchain with G-Cter in SUMO2) cross-link. Mg(2+)-binding residues include D541 and D543. Residues K584, K599, K614, K622, K625, K632, K639, K655, K662, and K676 each participate in a glycyl lysine isopeptide (Lys-Gly) (interchain with G-Cter in SUMO2) cross-link. Residues 715–1171 (IPSMVDGLKP…SPSDLWKEDL (457 aa)) enclose the Topo IIA-type catalytic domain. Catalysis depends on Y805, which acts as the O-(5'-phospho-DNA)-tyrosine intermediate. Residues 990 to 999 (KLQTSLTCNS) form an interaction with DNA region. Positions 1018–1028 (ILRDFFELRLK) match the Nuclear export signal motif. A Glycyl lysine isopeptide (Lys-Gly) (interchain with G-Cter in SUMO2) cross-link involves residue K1075. 2 disordered regions span residues 1090-1123 (WKEAQQKVPDEEENEESDNEKETEKSDSVTDSGP) and 1184-1531 (KEKQ…DDLF). Residues 1099-1108 (DEEENEESDN) are compositionally biased toward acidic residues. Residue S1106 is modified to Phosphoserine; by CK1. Residues K1114, K1196, and K1204 each participate in a glycyl lysine isopeptide (Lys-Gly) (interchain with G-Cter in SUMO2) cross-link. T1205 is subject to Phosphothreonine. Phosphoserine is present on S1213. Residue K1228 forms a Glycyl lysine isopeptide (Lys-Gly) (interchain with G-Cter in SUMO2) linkage. K1240 is covalently cross-linked (Glycyl lysine isopeptide (Lys-Gly) (interchain with G-Cter in SUMO1); alternate). K1240 is covalently cross-linked (Glycyl lysine isopeptide (Lys-Gly) (interchain with G-Cter in SUMO2); alternate). T1244 bears the Phosphothreonine mark. Position 1247 is a phosphoserine (S1247). The span at 1256–1272 (EGLKQRLEKKQKREPGT) shows a compositional bias: basic and acidic residues. Glycyl lysine isopeptide (Lys-Gly) (interchain with G-Cter in SUMO2) cross-links involve residues K1259, K1276, K1283, and K1286. Phosphoserine is present on residues S1295, S1297, S1299, and S1302. Residue T1327 is modified to Phosphothreonine. Residues 1330–1349 (LDSDEDFSDFDEKTDDEDFV) show a composition bias toward acidic residues. Residues S1332 and S1337 each carry the phosphoserine modification. T1343 carries the phosphothreonine; by PLK3 modification. Phosphoserine is present on residues S1351 and S1354. Residues K1363, K1367, and K1373 each participate in a glycyl lysine isopeptide (Lys-Gly) (interchain with G-Cter in SUMO2) cross-link. S1374 and S1377 each carry phosphoserine. A Glycyl lysine isopeptide (Lys-Gly) (interchain with G-Cter in SUMO2) cross-link involves residue K1385. Phosphoserine is present on residues S1387, S1391, S1392, and S1393. Low complexity predominate over residues 1406–1431 (TNPVPKKNVTVKKTAAKSQSSTSTTG). K1422 is covalently cross-linked (Glycyl lysine isopeptide (Lys-Gly) (interchain with G-Cter in SUMO2); alternate). K1422 carries the post-translational modification N6-acetyllysine; alternate. The interval 1433 to 1439 (KKRAAPK) is interaction with PLSCR1. Residue K1442 forms a Glycyl lysine isopeptide (Lys-Gly) (interchain with G-Cter in SUMO2); alternate linkage. K1442 is modified (N6-acetyllysine; alternate). Residue S1449 is modified to Phosphoserine. Residues K1454 and K1459 each participate in a glycyl lysine isopeptide (Lys-Gly) (interchain with G-Cter in SUMO2) cross-link. Phosphoserine; by CK2 is present on S1469. T1470 is subject to Phosphothreonine. S1471, S1474, and S1476 each carry phosphoserine. Residues K1484 and K1492 each participate in a glycyl lysine isopeptide (Lys-Gly) (interchain with G-Cter in SUMO2) cross-link. Over residues 1491-1502 (SKGESDDFHMDF) the composition is skewed to basic and acidic residues. Phosphoserine is present on residues S1495, S1504, and S1525.

This sequence belongs to the type II topoisomerase family. Homodimer. Interacts with COPS5. Interacts with RECQL5; this stimulates DNA decatenation. Interacts with SETMAR; stimulates the topoisomerase activity. Interacts with DHX9; this interaction occurs in a E2 enzyme UBE2I- and RNA-dependent manner, negatively regulates DHX9-mediated double-stranded DNA and RNA duplex helicase activity and stimulates TOP2A-mediated supercoiled DNA relaxation activity. Interacts with HNRNPU (via C-terminus); this interaction protects the topoisomerase TOP2A from degradation and positively regulates the relaxation of supercoiled DNA in a RNA-dependent manner. Interacts with MCM3AP isoform GANP. Interacts with ERCC6. Interacts with PLSCR1. Interacts with GCNA; this interaction allows the resolution of topoisomerase II (TOP2A) DNA-protein cross-links. Interacts with POL1RA/RPA1 (via dock II) and UBTF in the context of Pol I complex; may assist Pol I transcription initiation by releasing supercoils occurring during DNA unwinding. Interacts with TPRN; TPRN interacts with a number of DNA damage response proteins, is recruited to sites of DNA damage and may play a role in DNA damage repair. Mg(2+) is required as a cofactor. The cofactor is Mn(2+). Requires Ca(2+) as cofactor. Phosphorylation has no effect on catalytic activity. However, phosphorylation at Ser-1106 by CSNK1D/CK1 promotes DNA cleavable complex formation. Post-translationally, (Microbial infection) Deubiquitinated by Epstein-Barr virus BPLF1; leading to stabilized SUMOylated TOP2A trapped in cleavage complexes, which halts the DNA damage response to TOP2A-induced double-strand DNA breaks. In terms of processing, SUMOylated. Expressed in the tonsil, spleen, lymph node, thymus, skin, pancreas, testis, colon, kidney, liver, brain and lung. Also found in high-grade lymphomas, squamous cell lung tumors and seminomas.

The protein resides in the cytoplasm. It localises to the nucleus. The protein localises to the nucleoplasm. It is found in the nucleolus. The enzyme catalyses ATP-dependent breakage, passage and rejoining of double-stranded DNA.. With respect to regulation, specifically inhibited by the intercalating agent amsacrine. Key decatenating enzyme that alters DNA topology by binding to two double-stranded DNA molecules, generating a double-stranded break in one of the strands, passing the intact strand through the broken strand, and religating the broken strand. May play a role in regulating the period length of BMAL1 transcriptional oscillation. In Homo sapiens (Human), this protein is DNA topoisomerase 2-alpha (TOP2A).